The primary structure comprises 367 residues: Uroporphyrinogen decarboxylase (367 aa).

Substrate-binding positions include 27-31 (RQAGR), D77, Y157, T212, and H333.

It belongs to the uroporphyrinogen decarboxylase family. As to quaternary structure, homodimer.

Its subcellular location is the cytoplasm. It carries out the reaction uroporphyrinogen III + 4 H(+) = coproporphyrinogen III + 4 CO2. The protein operates within porphyrin-containing compound metabolism; protoporphyrin-IX biosynthesis; coproporphyrinogen-III from 5-aminolevulinate: step 4/4. Its function is as follows. Catalyzes the decarboxylation of four acetate groups of uroporphyrinogen-III to yield coproporphyrinogen-III. In Cupriavidus metallidurans (strain ATCC 43123 / DSM 2839 / NBRC 102507 / CH34) (Ralstonia metallidurans), this protein is Uroporphyrinogen decarboxylase.